The sequence spans 513 residues: OTU domain-containing protein 5-A (513 aa).

Disordered stretches follow at residues 1–75 (MTIL…GGAG) and 99–136 (GPGH…DEYE). In terms of domain architecture, OTU spans 166 to 289 (FIIKQMKEDG…NIHYNSVVNP (124 aa)). Positions 171–177 (MKEDGAC) are cys-loop. Asp174 is an active-site residue. The Nucleophile role is filled by Cys177. The segment at 226–236 (KRKNNCHGNHI) is variable-loop. The his-loop stretch occupies residues 277–282 (YHRNIH). His282 is a catalytic residue. The interval 387–446 (LEEWSGRSPRQRSTAGSPEHPDLHAELCMKPPSPGAPLILGKPPSPCAPGPSNQMSTGAD) is disordered.

It belongs to the peptidase C85 family.

The catalysed reaction is Thiol-dependent hydrolysis of ester, thioester, amide, peptide and isopeptide bonds formed by the C-terminal Gly of ubiquitin (a 76-residue protein attached to proteins as an intracellular targeting signal).. Functionally, deubiquitinating enzyme that may function as negative regulator of the innate immune system. Has peptidase activity towards 'Lys-48'- and 'Lys-63'-linked polyubiquitin chains. Can also cleave 'Lys-11'-linked ubiquitin chains (in vitro). The polypeptide is OTU domain-containing protein 5-A (otud5-a) (Xenopus laevis (African clawed frog)).